Reading from the N-terminus, the 767-residue chain is Polyribonucleotide nucleotidyltransferase (767 aa).

2 residues coordinate Mg(2+): Asp-488 and Asp-494. One can recognise a KH domain in the interval 555 to 614 (PRLYTMKINPEKIRDVIGKGGSVIRALTEETGCQIDIGEDGTITIASTDADKAELAKKRI). In terms of domain architecture, S1 motif spans 624–692 (GKVYEGPVVK…EKGRIKLSMK (69 aa)). The span at 700–742 (GMEFEERAPRREGGFGDRGDRGDRGPRRDRGGDRPERGERPAR) shows a compositional bias: basic and acidic residues. The tract at residues 700 to 767 (GMEFEERAPR…QPQQQQGQQQ (68 aa)) is disordered. A compositionally biased stretch (low complexity) spans 752 to 767 (GAPAAGQPQQQQGQQQ).

This sequence belongs to the polyribonucleotide nucleotidyltransferase family. It depends on Mg(2+) as a cofactor.

It is found in the cytoplasm. The enzyme catalyses RNA(n+1) + phosphate = RNA(n) + a ribonucleoside 5'-diphosphate. Functionally, involved in mRNA degradation. Catalyzes the phosphorolysis of single-stranded polyribonucleotides processively in the 3'- to 5'-direction. In Leptothrix cholodnii (strain ATCC 51168 / LMG 8142 / SP-6) (Leptothrix discophora (strain SP-6)), this protein is Polyribonucleotide nucleotidyltransferase.